The primary structure comprises 332 residues: Homeobox protein DLX-2 (332 aa).

Residues 19–28 are compositionally biased toward polar residues; it reads ASSTYHQHQQ. The tract at residues 19-83 is disordered; that stretch reads ASSTYHQHQQ…QHPAGGGGGG (65 aa). The span at 40-49 shows a compositional bias: low complexity; sequence NSNSSSSNSS. The span at 55-75 shows a compositional bias: polar residues; the sequence is ESPTLPVSTATDSSYYTNQQH. Residues 155 to 214 constitute a DNA-binding region (homeobox); sequence VRKPRTIYSSFQLAALQRRFQKTQYLALPERAELAASLGLTQTQVKIWFQNRRSKFKKMW. Disordered regions lie at residues 219–272 and 304–332; these read IPTE…SSPS and PSQT…GTIF. S235 carries the post-translational modification Phosphoserine. A compositionally biased stretch (gly residues) spans 253 to 266; the sequence is AGGGPGSGGGGAGS. Basic residues predominate over residues 310–320; the sequence is AHHHHHHHHHA.

It belongs to the distal-less homeobox family. As to quaternary structure, interacts (via homeobox DNA-binding domain) with POU4F2; this interaction enhances retinal ganglion cell (RGC) differentiation. Post-translationally, phosphorylated by serine/threonine kinases. In terms of tissue distribution, expressed only in neural and other ectodermal structures of the head: the brain, the vomeronasal organ, and the preameloblasts of the teeth. Primarily expressed in the germinal cells of the ventral forebrain in the midgestational embryo, and in both dorsal and ventral ventricular zones in late embryogenesis and early postnatal life. Expressed in the inner nuclear layer of the retina.

It is found in the nucleus. Acts as a transcriptional activator. Activates transcription of CGA/alpha-GSU, via binding to the downstream activin regulatory element (DARE) in the gene promoter. Plays a role in terminal differentiation of interneurons, such as amacrine and bipolar cells in the developing retina. Likely to play a regulatory role in the development of the ventral forebrain. May play a role in craniofacial patterning and morphogenesis. In Mus musculus (Mouse), this protein is Homeobox protein DLX-2 (Dlx2).